A 144-amino-acid chain; its full sequence is TSC22 domain family protein 1 (144 aa).

The tract at residues 77 to 98 (LKEQIKELIEKNSQLEQENNLL) is leucine-zipper. Residues 109–144 (QFQAQLQTGSPPATTQPQGSTQPPAQPASQGSGPTA) are disordered.

The protein belongs to the TSC-22/Dip/Bun family. Forms homodimers. Forms a heterodimer with TSC22D4/THG1. Interacts with histone H1-2. Interacts with GNL3.

It is found in the cytoplasm. The protein resides in the nucleus. It localises to the mitochondrion. Functionally, transcriptional repressor. Plays a role in the repression of hematopoietic precursor cell growth. Promotes IL2 deprivation-induced apoptosis in T-lymphocytes, via repression of TSC22D3/GILZ transcription and activation of the caspase cascade. Positively regulates cell death in response to TGFB3 during mammary gland involution. The chain is TSC22 domain family protein 1 from Bathyergus suillus (Cape dune mole rat).